Consider the following 597-residue polypeptide: DNA primase (597 aa).

Residues Cys-40, His-43, Cys-61, and Cys-64 each contribute to the Zn(2+) site. The CHC2-type zinc-finger motif lies at 40–64; the sequence is CPFHGEKTPSFSVSPEKQIFHCFGC. In terms of domain architecture, Toprim spans 262-342; the sequence is QEALLVEGFA…RVKVASLPNG (81 aa). Mg(2+)-binding residues include Glu-268, Asp-311, and Asp-313. Residues 429–447 show a composition bias toward basic and acidic residues; the sequence is LSRSQRERTKPREAPDGET. Residues 429–448 form a disordered region; that stretch reads LSRSQRERTKPREAPDGETA.

The protein belongs to the DnaG primase family. As to quaternary structure, monomer. Interacts with replicative helicase DnaB, as DnaB(6):DnaG(3). A stable complex DnaI(6):DnaB(6):DnaG(3) fragment can be isolated; DnaI and DnaG do not contact each other (DnaI in this complex is derived from B.subtilis). Requires Zn(2+) as cofactor. Mg(2+) is required as a cofactor.

The enzyme catalyses ssDNA + n NTP = ssDNA/pppN(pN)n-1 hybrid + (n-1) diphosphate.. Functionally, RNA polymerase that catalyzes the synthesis of short RNA molecules used as primers for DNA polymerase during DNA replication. In Geobacillus stearothermophilus (Bacillus stearothermophilus), this protein is DNA primase.